Reading from the N-terminus, the 209-residue chain is PRA1 family protein A3 (209 aa).

4 helical membrane passes run 51 to 72 (LYYY…ALIT), 76 to 98 (AILG…AATF), 143 to 163 (LVFV…SCGL), and 164 to 184 (LWVL…ASLR).

Belongs to the PRA1 family.

It is found in the endosome membrane. Its function is as follows. May be involved in both secretory and endocytic intracellular trafficking in the endosomal/prevacuolar compartments. This chain is PRA1 family protein A3 (PRA1A3), found in Arabidopsis thaliana (Mouse-ear cress).